Reading from the N-terminus, the 1744-residue chain is Myotubularin-related protein 5 (1744 aa).

In terms of domain architecture, uDENN spans 14–150 (DTVAVIVLEE…IRFLTYELVE (137 aa)). In terms of domain architecture, cDENN spans 165–304 (ELGFELIPIS…YYNSLHQRLR (140 aa)). Residues 306-412 (VMFTTTSQED…LTRALPRRKH (107 aa)) form the dDENN domain. The GRAM domain maps to 787–871 (KGNFDPVLAH…LYSMESFKKL (85 aa)). Positions 996 to 1447 (NAHIRYAVID…PQIHMWPFLA (452 aa)) constitute a Myotubularin phosphatase domain. Polar residues predominate over residues 1102–1116 (TGSMTGSQQTLHSKA). The interval 1102–1123 (TGSMTGSQQTLHSKASSNEESS) is disordered. Residues 1540–1590 (IHELTPFTVGARPVQCCYCTNILTRWSKAVHCKKCRIHVHEGCVNRNITIG) form a Phorbol-ester/DAG-type zinc finger. The PH domain occupies 1643-1743 (PPLCTGYLSK…WKECIEQVIR (101 aa)).

It belongs to the protein-tyrosine phosphatase family. Non-receptor class myotubularin subfamily.

Its function is as follows. Probably acts as an adapter for other myotubularin-like phosphatases. The sequence is that of Myotubularin-related protein 5 from Caenorhabditis elegans.